The sequence spans 374 residues: C-X-C chemokine receptor type 5 (374 aa).

At 1 to 57 (MNYPLTLDMGSITYNMDDLYKELAFYSNSTEIPLQDSNFCSTVEGPLLTSFKAVFMP) the chain is on the extracellular side. Asn28 carries N-linked (GlcNAc...) asparagine glycosylation. The chain crosses the membrane as a helical span at residues 58–78 (VAYSLIFLLGMMGNILVLVIL). The Cytoplasmic segment spans residues 79–90 (ERHRHTRSSTET). A helical membrane pass occupies residues 91 to 111 (FLFHLAVADLLLVFILPFAVA). At 112–126 (EGSVGWVLGTFLCKT) the chain is on the extracellular side. A disulfide bridge links Cys124 with Cys204. A helical transmembrane segment spans residues 127–147 (VIALHKINFYCSSLLLACIAV). Over 148–169 (DRYLAIVHAVHAYRRRRLLSIH) the chain is Cytoplasmic. The helical transmembrane segment at 170–190 (ITCTAIWLAGFLFALPELLFA) threads the bilayer. Topologically, residues 191-221 (KVGQPHNNDSLPQCTFSQENEAETRAWFTSR) are extracellular. N-linked (GlcNAc...) asparagine glycosylation is present at Asn198. Residues 222 to 242 (FLYHIGGFLLPMLVMGWCYVG) traverse the membrane as a helical segment. The Cytoplasmic portion of the chain corresponds to 243 to 261 (VVHRLLQAQRRPQRQKAVR). The chain crosses the membrane as a helical span at residues 262–282 (VAILVTSIFFLCWSPYHIVIF). At 283–306 (LDTLERLKAVNSSCELSGYLSVAI) the chain is on the extracellular side. Residues 307-327 (TLCEFLGLAHCCLNPMLYTFA) traverse the membrane as a helical segment. At 328–374 (GVKFRSDLSRLLTKLGCAGPASLCQLFPNWRKSSLSESENATSLTTF) the chain is on the cytoplasmic side.

The protein belongs to the G-protein coupled receptor 1 family. Mainly in spleen, in resting B-cells.

It localises to the cell membrane. Functionally, cytokine receptor that binds to B-lymphocyte chemoattractant (BLC). Involved in B-cell migration into B-cell follicles of spleen and Peyer patches but not into those of mesenteric or peripheral lymph nodes. The protein is C-X-C chemokine receptor type 5 (Cxcr5) of Mus musculus (Mouse).